Reading from the N-terminus, the 161-residue chain is Phosphopantetheine adenylyltransferase (161 aa).

Residue threonine 9 coordinates substrate. Residues 9 to 10 (TF) and histidine 17 contribute to the ATP site. Lysine 41, leucine 73, and arginine 87 together coordinate substrate. ATP is bound by residues 88–90 (GLR), glutamate 98, and 123–129 (YQFISGT).

Belongs to the bacterial CoaD family. In terms of assembly, homohexamer. The cofactor is Mg(2+).

Its subcellular location is the cytoplasm. It catalyses the reaction (R)-4'-phosphopantetheine + ATP + H(+) = 3'-dephospho-CoA + diphosphate. It functions in the pathway cofactor biosynthesis; coenzyme A biosynthesis; CoA from (R)-pantothenate: step 4/5. Reversibly transfers an adenylyl group from ATP to 4'-phosphopantetheine, yielding dephospho-CoA (dPCoA) and pyrophosphate. This Janthinobacterium sp. (strain Marseille) (Minibacterium massiliensis) protein is Phosphopantetheine adenylyltransferase.